The primary structure comprises 173 residues: Crossover junction endodeoxyribonuclease RuvC (173 aa).

Catalysis depends on residues aspartate 8, glutamate 67, and aspartate 139. Residues aspartate 8, glutamate 67, and aspartate 139 each contribute to the Mg(2+) site.

The protein belongs to the RuvC family. In terms of assembly, homodimer which binds Holliday junction (HJ) DNA. The HJ becomes 2-fold symmetrical on binding to RuvC with unstacked arms; it has a different conformation from HJ DNA in complex with RuvA. In the full resolvosome a probable DNA-RuvA(4)-RuvB(12)-RuvC(2) complex forms which resolves the HJ. It depends on Mg(2+) as a cofactor.

It localises to the cytoplasm. The catalysed reaction is Endonucleolytic cleavage at a junction such as a reciprocal single-stranded crossover between two homologous DNA duplexes (Holliday junction).. Its function is as follows. The RuvA-RuvB-RuvC complex processes Holliday junction (HJ) DNA during genetic recombination and DNA repair. Endonuclease that resolves HJ intermediates. Cleaves cruciform DNA by making single-stranded nicks across the HJ at symmetrical positions within the homologous arms, yielding a 5'-phosphate and a 3'-hydroxyl group; requires a central core of homology in the junction. The consensus cleavage sequence is 5'-(A/T)TT(C/G)-3'. Cleavage occurs on the 3'-side of the TT dinucleotide at the point of strand exchange. HJ branch migration catalyzed by RuvA-RuvB allows RuvC to scan DNA until it finds its consensus sequence, where it cleaves and resolves the cruciform DNA. This is Crossover junction endodeoxyribonuclease RuvC from Psychromonas ingrahamii (strain DSM 17664 / CCUG 51855 / 37).